The following is a 579-amino-acid chain: A-type ATP synthase subunit A (579 aa).

Residue 229-236 (GPFGSGKT) coordinates ATP.

This sequence belongs to the ATPase alpha/beta chains family. In terms of assembly, has multiple subunits with at least A(3), B(3), C, D, E, F, H, I and proteolipid K(x).

It is found in the cell membrane. The catalysed reaction is ATP + H2O + 4 H(+)(in) = ADP + phosphate + 5 H(+)(out). In terms of biological role, component of the A-type ATP synthase that produces ATP from ADP in the presence of a proton gradient across the membrane. The A chain is the catalytic subunit. The protein is A-type ATP synthase subunit A of Methanocella arvoryzae (strain DSM 22066 / NBRC 105507 / MRE50).